Reading from the N-terminus, the 147-residue chain is Large ribosomal subunit protein uL13 (147 aa).

Belongs to the universal ribosomal protein uL13 family. As to quaternary structure, part of the 50S ribosomal subunit.

Its function is as follows. This protein is one of the early assembly proteins of the 50S ribosomal subunit, although it is not seen to bind rRNA by itself. It is important during the early stages of 50S assembly. This is Large ribosomal subunit protein uL13 from Limosilactobacillus fermentum (strain NBRC 3956 / LMG 18251) (Lactobacillus fermentum).